We begin with the raw amino-acid sequence, 125 residues long: UPF0102 protein Rpic_3463 (125 aa).

The protein belongs to the UPF0102 family.

This Ralstonia pickettii (strain 12J) protein is UPF0102 protein Rpic_3463.